Reading from the N-terminus, the 1985-residue chain is MAAHNILLFGDQADAPIPMIRRIVEKSRYSKNLEYFLQSAVDNVQLEVAKLTPAERETVGSFQSVQDLITALTSKSDRHGIAQMVLVFIARIGELILHAESNPTLLSSSTPLLSLGICGGLLPAAAAAVATNVGELVEVASYMAGVNCRVAAMISRRSLQIEDNAGSWAFSVLGKLVMQLPTILDGFHNEQSIPRHRRAYIAISTPTWATVFGPPSVLKKLLETSAALSKSDITILPAFGAVHAGHLAAPEFEELVDESPLLNKSIKSGYKLLSGSKYAPFAGSSLRDLLPQIMLDIFQNSTNPSRLFEVGGSYLQKGKELSLYMLGATSYLVLLRRSLHAQGFDVALKTNAPILQASELRGGSGSVAIIGMSGQFPGASSVDEMWELLMQREELHKKIPSDRFNADDYLDETGRGFNAITTAYGCFLEHPGLFDHKMFNVSPREAMQMDPGQRLVMHAVYEALEDAGVANNGSVATDSKRIGTYIGDGSDDWRELQQPHGVDKYILQGTQRSFTPGRLNHHFKWEGATFCVDSACGSTASAVGLAYRALVNRDCDTAIAGGSNIIATPFWQSALSKGGFLSTTGGCKTFRGDADGYCRGEAIGVIVLKRLEDALYDNDNIISVIRSYARNHSADTVSITRPHVPAQERVYRRVLQKAGLEPNDISYVEMHGTGTTAGDSAELESVVNILAQKGERETPLVVGAIKANLGHSEAASGISSIMKAAIMFRKGVIPPQVGIPQKLGNFECLERGSVLIPGNPIPYTRQSIGKKRTMIVNNFDAAGGNSCFVLEEPPVPQIKAPDPRPYHVVTVSAHCPQSLERNEQLLRQFLLDNADISLADLAYTTTARRMHHSMRSAYSGNSIKAIVDGINRVLSKKKEAPTARKPPVVFAFTGQGAHYAGMGADLFRSSQAFRATITSLQRICESHGFPPFVQLISKSESPVEKATTVQIHLALIALEIALADLWKTWGIAPDLVIGHSIGEYAALYAAGVLSATDAMYIVGRRATLIQENCKEGTHGMLSISGTSDDVAAILSDERIMSSCEVACRNSPGMIVLSGEHEELLQIEGLLKDQQIKCRLLDVPYAMHSHQMDGIVEGLREAAQGVLFGTPRVKVISTLLGVEHTKFDSDYLVRHTRQAVNFEQAISHCTSHGLVDKTSLWLEIGPNPVSLGLIRSNTNVTSDRALHSLKNGDDNWKSISATLASFYKAGMSIQWREYHRDFANNLSLITLPKYAFDTRDFWMKYTEGQRHSEVQPISTCLHRLVKQEDTAKEQHATFTAEIGHPSLLKIIKGHKLSGITVCPAGVFSEMSLTAARYLLTNGSSKASFPSLSVLDTQIDHPIMPKADSKQTVQVEINRSKQSNEFFVSIADQAKPSVINSKCVVRLRDEHAFDLERRQMLEVIQPKIAKLTKAAAGGRANRFQGKLFYRLFANLMDYTGQYEGVQEAIVSSDFTEALATVQLPKAQSSGESWTLSPYWIDALTHLAGFLFNGNPMNSGDYVFIGIHMERMEIVAKDLSTDVTYQCYAFIEQSEGSDIYRGHVYILDGDLIVGFLEGARFRKMPRTTLHRILGKAEPVKNTKQVPHPTTNGSAIANGVNRNPSHNEPSTPPVANGVNGTNGDQSDRKSLYSVLVQQLIEETGMEESELTPSTFFVEIGVDSLMSISILAALKAETGTELNASFLMDYPTLEDAQRELRRLEGKDSVNSNDQSTMVNGKEKTRECNVVLMQGPSSSTSRKPVFLIADGAGSAAAYIHFPKLGQDLPVYAVESPWVNDPENFVCSFDEAAAMYLAAIRSKQPHGPYILGGWSAGGVFAYEVARLLLEAGERVLGLIIIDITGPRHEDRSKVESPTMEIIDQIGMLSGIERNFDDTTTQSRRLKQHMLSTVTCFSKMDPTPMSPGRHPDCTFVIWAKKDILPKAALDTLPAGLNAWFYPSSHDLGPNGWDALVGNKMEYFQIEGDHFSIMTAPEVTQLGKIIQEAIGKIS.

The tract at residues 7–243 (LLFGDQADAP…TILPAFGAVH (237 aa)) is N-terminal acylcarrier protein transacylase (SAT) domain. Residues 364-792 (SGSVAIIGMS…GGNSCFVLEE (429 aa)) enclose the Ketosynthase family 3 (KS3) domain. Active-site for beta-ketoacyl synthase activity residues include Cys536, His671, and His711. The tract at residues 889–1148 (VFAFTGQGAH…VNFEQAISHC (260 aa)) is malonyl-CoA:ACP transacylase (MAT) domain. Ser980 serves as the catalytic For acyl/malonyl transferase activity. Residues 1261–1392 (HRLVKQEDTA…VRLRDEHAFD (132 aa)) form an N-terminal hotdog fold region. The 307-residue stretch at 1261–1567 (HRLVKQEDTA…FRKMPRTTLH (307 aa)) folds into the PKS/mFAS DH domain. Residues 1265-1566 (KQEDTAKEQH…RFRKMPRTTL (302 aa)) form a product template (PT) domain region. The Proton acceptor; for dehydratase activity role is filled by His1293. Positions 1414–1567 (AGGRANRFQG…FRKMPRTTLH (154 aa)) are C-terminal hotdog fold. Residue Asp1479 is the Proton donor; for dehydratase activity of the active site. The segment covering 1578–1605 (NTKQVPHPTTNGSAIANGVNRNPSHNEP) has biased composition (polar residues). The interval 1578–1622 (NTKQVPHPTTNGSAIANGVNRNPSHNEPSTPPVANGVNGTNGDQS) is disordered. One can recognise a Carrier domain in the interval 1622 to 1699 (SDRKSLYSVL…DAQRELRRLE (78 aa)). Ser1659 is modified (O-(pantetheine 4'-phosphoryl)serine). Residues 1719–1913 (TRECNVVLMQ…DCTFVIWAKK (195 aa)) are thioesterase (TE) domain.

It functions in the pathway secondary metabolite biosynthesis; terpenoid biosynthesis. Non-reducing polyketide synthase; part of the gene cluster that mediates the biosynthesis of the meroterpenoids nectripenoids A and B, as well as cochliquninone D and isocochliquninone E. The pathway probably begins with the HR-PKS ntnH that catalyzes two chain-extension steps to form a reduced triketide, which then primes the SAT domain in the NR-PKS ntnG to initiate three more cycles of extension to give a linear hexaketide corresponding to the polyketide part of nectripenoids. The FAD-dependent monooxygenase ntnJ then performs an oxidative decarboxylation at C11 of the ntnH/ntnG product, via an electrophilic aromatic hydroxylation with concomitant ipso-decarboxylation. The membrane-bound polyprenyl transferase ntnF then introduces a farnesyl group before the FAD-dependent monooxygenase ntnK functions as the first epoxidase on terminal C12'-C13' olefin, followed by a second epoxidation on C7'-C8' catalyzed by ntnA. The terpene cyclase/mutase ntnI then initiates the sequential tricyclic ring formation through protonation of the terminal epoxide and catalyzes the regioselective and stereoselective 6/6/6-tricyclic ring formation. The cytochrome P450 monooxygenase ntnM may then hydroxylate C1'. The polypeptide is Non-reducing polyketide synthase ntnG (Nectria sp).